The following is a 607-amino-acid chain: ATP-dependent rRNA helicase SPB4 (607 aa).

A Q motif motif is present at residues 7-35 (WDDLEYPIQPWIRSAVDVMGFENMTPVQA). The Helicase ATP-binding domain occupies 38–224 (IPLFARNKDV…KTGLRNPVKV (187 aa)). Position 51-58 (51-58 (SVTGSGKT)) interacts with ATP. Residues 172–175 (DEAD) carry the DEAD box motif. Positions 248-404 (KLEQVISIIN…EISLDIVNLP (157 aa)) constitute a Helicase C-terminal domain. The interval 527-607 (KSELKKKNMS…NGMQGSFDDL (81 aa)) is disordered. Residues 529–565 (ELKKKNMSWSNNTQSKEEKVERRTKMALKRKRIEEEL) adopt a coiled-coil conformation. 2 stretches are compositionally biased toward basic and acidic residues: residues 543 to 552 (SKEEKVERRT) and 560 to 570 (RIEEELSKEAD). The segment covering 587-601 (ILQNKKSKNSNNGMQ) has biased composition (polar residues).

It belongs to the DEAD box helicase family. DDX55/SPB4 subfamily. Component of pre-60S ribosomal complexes.

It is found in the nucleus. The protein resides in the nucleolus. It carries out the reaction ATP + H2O = ADP + phosphate + H(+). In terms of biological role, ATP-binding RNA helicase involved in the biogenesis of 60S ribosomal subunits. Binds 90S pre-ribosomal particles and dissociates from pre-60S ribosomal particles after processing of 27SB pre-rRNA. Required for the normal formation of 18S rRNA through the processing of pre-rRNAs at sites A0, A1 and A2, and the normal formation of 25S and 5.8S rRNAs through the processing of pre-rRNAs at sites C1 and C2. The polypeptide is ATP-dependent rRNA helicase SPB4 (Vanderwaltozyma polyspora (strain ATCC 22028 / DSM 70294 / BCRC 21397 / CBS 2163 / NBRC 10782 / NRRL Y-8283 / UCD 57-17) (Kluyveromyces polysporus)).